The primary structure comprises 490 residues: UDP-N-acetylmuramate--L-alanine ligase (490 aa).

133 to 139 serves as a coordination point for ATP; the sequence is GTHGKTS.

This sequence belongs to the MurCDEF family.

It localises to the cytoplasm. It carries out the reaction UDP-N-acetyl-alpha-D-muramate + L-alanine + ATP = UDP-N-acetyl-alpha-D-muramoyl-L-alanine + ADP + phosphate + H(+). It participates in cell wall biogenesis; peptidoglycan biosynthesis. Its function is as follows. Cell wall formation. The chain is UDP-N-acetylmuramate--L-alanine ligase from Saccharopolyspora erythraea (strain ATCC 11635 / DSM 40517 / JCM 4748 / NBRC 13426 / NCIMB 8594 / NRRL 2338).